A 172-amino-acid polypeptide reads, in one-letter code: 3-hydroxydecanoyl-[acyl-carrier-protein] dehydratase (172 aa).

H71 is a catalytic residue.

It belongs to the thioester dehydratase family. FabA subfamily. As to quaternary structure, homodimer.

The protein localises to the cytoplasm. It catalyses the reaction a (3R)-hydroxyacyl-[ACP] = a (2E)-enoyl-[ACP] + H2O. The catalysed reaction is (3R)-hydroxydecanoyl-[ACP] = (2E)-decenoyl-[ACP] + H2O. The enzyme catalyses (2E)-decenoyl-[ACP] = (3Z)-decenoyl-[ACP]. The protein operates within lipid metabolism; fatty acid biosynthesis. Functionally, necessary for the introduction of cis unsaturation into fatty acids. Catalyzes the dehydration of (3R)-3-hydroxydecanoyl-ACP to E-(2)-decenoyl-ACP and then its isomerization to Z-(3)-decenoyl-ACP. Can catalyze the dehydratase reaction for beta-hydroxyacyl-ACPs with saturated chain lengths up to 16:0, being most active on intermediate chain length. The polypeptide is 3-hydroxydecanoyl-[acyl-carrier-protein] dehydratase (Escherichia coli (strain SE11)).